The chain runs to 1038 residues: DNA polymerase delta catalytic subunit (1038 aa).

The interval 1 to 29 (MSHSIPITSSPPPALKKLKLPNGSEEPSE) is disordered. 4 residues coordinate Zn(2+): Cys942, Cys945, Cys958, and Cys961. The segment at 942 to 961 (CVSCRTPLKKDNLGALCPNC) adopts a CysA-type zinc-finger fold. Cys992, Cys995, Cys1005, and Cys1010 together coordinate [4Fe-4S] cluster. Positions 992–1010 (CQRCQGSLHQEVLCSNKDC) match the CysB motif motif.

The protein belongs to the DNA polymerase type-B family. In terms of assembly, heterodimer with subunits of 125 kDa and 50 kDa. The 125 kDa subunit contains the polymerase active site and most likely the active site for the 3'-5' exonuclease activity. It depends on [4Fe-4S] cluster as a cofactor.

Its subcellular location is the nucleus. The enzyme catalyses DNA(n) + a 2'-deoxyribonucleoside 5'-triphosphate = DNA(n+1) + diphosphate. In terms of biological role, this polymerase possesses two enzymatic activities: DNA synthesis (polymerase) and an exonucleolytic activity that degrades single-stranded DNA in the 3'- to 5'-direction. The sequence is that of DNA polymerase delta catalytic subunit (POL3) from Candida albicans (Yeast).